Here is a 343-residue protein sequence, read N- to C-terminus: Ornithine carbamoyltransferase, catabolic (343 aa).

Position 62 to 65 (62 to 65) interacts with carbamoyl phosphate; sequence STRT. H79 is a Ni(2+) binding site. Carbamoyl phosphate-binding positions include Q89, R113, and 140–143; that span reads HPTQ. L-ornithine is bound by residues N172, D236, and 240–241; that span reads SM. Carbamoyl phosphate is bound by residues 278-279 and R323; that span reads CL.

It belongs to the aspartate/ornithine carbamoyltransferase superfamily. OTCase family. As to quaternary structure, homohexamer; dimer of trimers. Ni(2+) is required as a cofactor.

The protein resides in the cytoplasm. It catalyses the reaction carbamoyl phosphate + L-ornithine = L-citrulline + phosphate + H(+). Its pathway is amino-acid degradation; L-arginine degradation via ADI pathway; carbamoyl phosphate from L-arginine: step 2/2. Its function is as follows. Involved in the catabolism of arginine. Catalyzes the phosphorolysis of citrulline, the reverse reaction of the biosynthetic one, yielding ornithine and carbamoyl phosphate which serve to generate ATP from ADP. The protein is Ornithine carbamoyltransferase, catabolic of Lentilactobacillus hilgardii (Lactobacillus hilgardii).